Consider the following 314-residue polypeptide: uncharacterized protein (314 aa).

2 consecutive transmembrane segments (helical) span residues Leu23 to Phe43 and Met98 to Thr118. Positions Gly165–Thr184 are enriched in gly residues. The interval Gly165–Glu314 is disordered. Over residues Gly190–Thr202 the composition is skewed to pro residues. 2 stretches are compositionally biased toward low complexity: residues Pro203–Thr212 and Ala219–Pro232. The chain crosses the membrane as a helical span at residues Pro221 to Ala241. A compositionally biased stretch (basic and acidic residues) spans Leu294–Glu314.

It localises to the cell membrane. This is an uncharacterized protein from Mycobacterium tuberculosis (strain CDC 1551 / Oshkosh).